A 1477-amino-acid polypeptide reads, in one-letter code: FHA domain-containing protein PS1 (1477 aa).

In terms of domain architecture, FHA spans 64-115; it reads LVVGRHPDCDILLTHPSISRFHLEIRSISSRQKLFVTDLSSVHGTWVRDLRI. Disordered stretches follow at residues 188–218, 588–644, 789–818, 832–911, 942–979, 1004–1030, and 1159–1225; these read ENTT…DEDT, LGKA…PKSF, PNSF…DSEF, LNQK…LIGS, ALAA…RDDV, IRTN…KQAL, and VEQE…IRSS. A compositionally biased stretch (basic and acidic residues) spans 589 to 607; it reads GKADIRSHEENGESEDSRQ. A compositionally biased stretch (polar residues) spans 832 to 849; the sequence is LNQKRNGETKVSSRQASP. Low complexity predominate over residues 870 to 883; it reads QSLCSSSQPPSESE. Polar residues-rich tracts occupy residues 885-897, 957-971, 1007-1018, and 1198-1212; these read NPAT…SGII, LSSS…QTPE, NKSQGKQKQTGR, and SSFQ…SSTA. Positions 1213–1225 are enriched in low complexity; sequence SARNNISRGIRSS.

Functionally, required for normal spindle orientation at male meiosis II and normal formation of tetrad of microspores. Not involved in female meiosis. This chain is FHA domain-containing protein PS1, found in Arabidopsis thaliana (Mouse-ear cress).